The chain runs to 497 residues: MAYNKSLKSLVFILLASQIVFVLFLCYGKSSRELGVKWNSDIRSWMTSYVGFNGETAAISEEQLIWAEKIPDYNEEIVVRLHLEEENNLSDILQKAQSQNLDIWDYNFDHVDLRLKEENFDFWKSQYRSDILINNLTETLFESIVPDTTNSPFSTEAFLQAVENGHLNHEMFTSFTDIFFKSYQNLESINSWLRLMASLYKDLSELVPVGITAEGRTILGLKLNGRHPSDNGEKIRNKKVIIIQGGSHAREWIGIPSVCYAAWQLLAKYDSDGHVRKLLDKFEWIFIPVLNVDGYEYTWSNDRLWSKNRQPLNNSECFGINLDANWAFGFNGNIDPCSNEYGGLSPFQANETMALFNLITESLSQEQKKVVGFLDVHSYSQSVLWPYAYTCDLFPPDTENFEELAIGLVKELHRVNSRYYTYQQACIPYDGFHKHYLPGTAIDWVYFAADVAWPFNIRLRDMGDYGYLLPAKQIVPTAKEFFAMILYYGEFIAEYAF.

An N-terminal signal peptide occupies residues 1-28 (MAYNKSLKSLVFILLASQIVFVLFLCYG). A propeptide spanning residues 29-148 (KSSRELGVKW…TLFESIVPDT (120 aa)) is cleaved from the precursor. The Peptidase M14 domain maps to 182-492 (SYQNLESINS…AMILYYGEFI (311 aa)). Positions 248 and 251 each coordinate Zn(2+). Substrate-binding positions include 248–251 (HARE) and 323–324 (DA). Cys-317 and Cys-337 are oxidised to a cystine. His-377 lines the Zn(2+) pocket. A substrate-binding site is contributed by 378 to 379 (SY).

Belongs to the peptidase M14 family. It depends on Zn(2+) as a cofactor.

Its subcellular location is the endoplasmic reticulum. It localises to the secreted. Inactive carboxypeptidase that may play a role in cell wall organization and biogenesis. The chain is Inactive metallocarboxypeptidase ecm14 from Schizosaccharomyces pombe (strain 972 / ATCC 24843) (Fission yeast).